A 514-amino-acid polypeptide reads, in one-letter code: tRNA-2-methylthio-N(6)-dimethylallyladenosine synthase (514 aa).

The disordered stretch occupies residues 1-21 (MNEEQRKASSVDVLAERDKKA). Residues 68–186 (RTFLIKTYGC…LPEILEEAYL (119 aa)) form the MTTase N-terminal domain. [4Fe-4S] cluster is bound by residues cysteine 77, cysteine 113, cysteine 147, cysteine 223, cysteine 227, and cysteine 230. The Radical SAM core domain occupies 209–440 (REGNIKAWVN…KKVGHYSQIA (232 aa)). One can recognise a TRAM domain in the interval 442-505 (SKYEGQTVTV…QYSLNGSFVK (64 aa)).

This sequence belongs to the methylthiotransferase family. MiaB subfamily. As to quaternary structure, monomer. [4Fe-4S] cluster serves as cofactor.

Its subcellular location is the cytoplasm. It catalyses the reaction N(6)-dimethylallyladenosine(37) in tRNA + (sulfur carrier)-SH + AH2 + 2 S-adenosyl-L-methionine = 2-methylsulfanyl-N(6)-dimethylallyladenosine(37) in tRNA + (sulfur carrier)-H + 5'-deoxyadenosine + L-methionine + A + S-adenosyl-L-homocysteine + 2 H(+). In terms of biological role, catalyzes the methylthiolation of N6-(dimethylallyl)adenosine (i(6)A), leading to the formation of 2-methylthio-N6-(dimethylallyl)adenosine (ms(2)i(6)A) at position 37 in tRNAs that read codons beginning with uridine. The protein is tRNA-2-methylthio-N(6)-dimethylallyladenosine synthase of Staphylococcus aureus (strain N315).